Consider the following 178-residue polypeptide: Sec-independent protein translocase protein TatB (178 aa).

The chain crosses the membrane as a helical span at residues 2 to 22 (LPEIGAAELLIIAAVALIVVG). The tract at residues 104–178 (HSPTGYENTV…KARKTAGSAE (75 aa)) is disordered. Residues 114-131 (EPPPPEPEPQPAAEPAPK) are compositionally biased toward pro residues. Over residues 141–154 (PKAAAAPKAAAKPK) the composition is skewed to low complexity.

The protein belongs to the TatB family. The Tat system comprises two distinct complexes: a TatABC complex, containing multiple copies of TatA, TatB and TatC subunits, and a separate TatA complex, containing only TatA subunits. Substrates initially bind to the TatABC complex, which probably triggers association of the separate TatA complex to form the active translocon.

It is found in the cell inner membrane. Part of the twin-arginine translocation (Tat) system that transports large folded proteins containing a characteristic twin-arginine motif in their signal peptide across membranes. Together with TatC, TatB is part of a receptor directly interacting with Tat signal peptides. TatB may form an oligomeric binding site that transiently accommodates folded Tat precursor proteins before their translocation. This Phenylobacterium zucineum (strain HLK1) protein is Sec-independent protein translocase protein TatB.